The following is a 384-amino-acid chain: Carbamoyl phosphate synthase small chain (384 aa).

The interval 1–189 is CPSase; the sequence is MSKSALLVLE…GLPEAKDDSE (189 aa). The L-glutamine site is built by S47, G241, and G243. A Glutamine amidotransferase type-1 domain is found at 193-380; that stretch reads HVVAYDFGAK…IELIKLSVNE (188 aa). The active-site Nucleophile is the C269. The L-glutamine site is built by L270, Q273, N311, G313, and F314. Residues H353 and E355 contribute to the active site.

Belongs to the CarA family. As to quaternary structure, composed of two chains; the small (or glutamine) chain promotes the hydrolysis of glutamine to ammonia, which is used by the large (or ammonia) chain to synthesize carbamoyl phosphate. Tetramer of heterodimers (alpha,beta)4.

The enzyme catalyses hydrogencarbonate + L-glutamine + 2 ATP + H2O = carbamoyl phosphate + L-glutamate + 2 ADP + phosphate + 2 H(+). It catalyses the reaction L-glutamine + H2O = L-glutamate + NH4(+). Its pathway is amino-acid biosynthesis; L-arginine biosynthesis; carbamoyl phosphate from bicarbonate: step 1/1. It functions in the pathway pyrimidine metabolism; UMP biosynthesis via de novo pathway; (S)-dihydroorotate from bicarbonate: step 1/3. Its function is as follows. Small subunit of the glutamine-dependent carbamoyl phosphate synthetase (CPSase). CPSase catalyzes the formation of carbamoyl phosphate from the ammonia moiety of glutamine, carbonate, and phosphate donated by ATP, constituting the first step of 2 biosynthetic pathways, one leading to arginine and/or urea and the other to pyrimidine nucleotides. The small subunit (glutamine amidotransferase) binds and cleaves glutamine to supply the large subunit with the substrate ammonia. This chain is Carbamoyl phosphate synthase small chain, found in Photobacterium profundum (strain SS9).